The following is a 181-amino-acid chain: MTADVNNLIWIDLEMTGLEPDVDRIIEIATLVTDQELNIIGQGPVIAIHQSDDVLAAMDDWNQKHHGESGLIDRVRASQETEAQAVAKTIAFLEQYVPKGASPMCGNSIGQDRRFLNRYMRELEDYFHYRNVDVSTIKELVKRWSPETMAGFKKQNTHQALQDIQESIAELQYYRSKVFKI.

One can recognise an Exonuclease domain in the interval 8–171 (LIWIDLEMTG…QDIQESIAEL (164 aa)). The active site involves Y129.

The protein belongs to the oligoribonuclease family.

It localises to the cytoplasm. Functionally, 3'-to-5' exoribonuclease specific for small oligoribonucleotides. This Shewanella baltica (strain OS155 / ATCC BAA-1091) protein is Oligoribonuclease.